A 355-amino-acid chain; its full sequence is Mu-like prophage FluMu I protein (355 aa).

Belongs to the peptidase U35 family.

Potential protease involved in virion morphogenesis. The sequence is that of Mu-like prophage FluMu I protein from Haemophilus influenzae (strain ATCC 51907 / DSM 11121 / KW20 / Rd).